The chain runs to 505 residues: Endoglucanase 5 (505 aa).

Positions 1–31 (MWMRRNQIVRKLTLGVVTTVLGMSLSFSALS) are cleaved as a signal peptide. The catalytic stretch occupies residues 32-334 (ATPVETHGQL…REQIRAGANL (303 aa)). Substrate-binding positions include H64, 68-69 (WF), Y95, and H130. Catalysis depends on E168, which acts as the Proton donor. Y230 is a substrate binding site. Residue E256 is the Nucleophile of the active site. Substrate-binding positions include 262-263 (AS), W290, and 295-297 (KSE). A disordered region spans residues 332-355 (ANLGGGDTPTTPTEPTNPGNGTTG). The segment at 335–352 (GGGDTPTTPTEPTNPGNG) is linker. The segment covering 339 to 355 (TPTTPTEPTNPGNGTTG) has biased composition (low complexity). In terms of domain architecture, CBM3 spans 353 to 505 (TTGDVVLQYR…KGTLVWGVEP (153 aa)).

It belongs to the glycosyl hydrolase 5 (cellulase A) family.

It is found in the secreted. The catalysed reaction is Endohydrolysis of (1-&gt;4)-beta-D-glucosidic linkages in cellulose, lichenin and cereal beta-D-glucans.. Functionally, endoglucanase with some exoglucanase activity. In Pectobacterium carotovorum subsp. carotovorum (Erwinia carotovora subsp. carotovora), this protein is Endoglucanase 5 (celV).